The primary structure comprises 61 residues: Small ribosomal subunit protein uS14 (61 aa).

Positions 24, 27, 40, and 43 each coordinate Zn(2+).

Belongs to the universal ribosomal protein uS14 family. Zinc-binding uS14 subfamily. In terms of assembly, part of the 30S ribosomal subunit. Contacts proteins S3 and S10. It depends on Zn(2+) as a cofactor.

Binds 16S rRNA, required for the assembly of 30S particles and may also be responsible for determining the conformation of the 16S rRNA at the A site. The protein is Small ribosomal subunit protein uS14 of Desulforamulus reducens (strain ATCC BAA-1160 / DSM 100696 / MI-1) (Desulfotomaculum reducens).